The chain runs to 143 residues: Small ribosomal subunit protein uS9 (143 aa).

Residues 124 to 143 (PEPKKFGGKGARARFQKSYR) are disordered. A compositionally biased stretch (basic residues) spans 134-143 (ARARFQKSYR).

It belongs to the universal ribosomal protein uS9 family.

The sequence is that of Small ribosomal subunit protein uS9 (RPS16) from Candida glabrata (strain ATCC 2001 / BCRC 20586 / JCM 3761 / NBRC 0622 / NRRL Y-65 / CBS 138) (Yeast).